The primary structure comprises 173 residues: Shikimate kinase 1 (173 aa).

14 to 19 (GAGKST) is an ATP binding site. Serine 18 contributes to the Mg(2+) binding site. 3 residues coordinate substrate: aspartate 36, arginine 60, and glycine 82. Arginine 120 contacts ATP. Arginine 140 lines the substrate pocket.

It belongs to the shikimate kinase family. As to quaternary structure, monomer. It depends on Mg(2+) as a cofactor.

It is found in the cytoplasm. The enzyme catalyses shikimate + ATP = 3-phosphoshikimate + ADP + H(+). It functions in the pathway metabolic intermediate biosynthesis; chorismate biosynthesis; chorismate from D-erythrose 4-phosphate and phosphoenolpyruvate: step 5/7. Catalyzes the specific phosphorylation of the 3-hydroxyl group of shikimic acid using ATP as a cosubstrate. This chain is Shikimate kinase 1, found in Hamiltonella defensa subsp. Acyrthosiphon pisum (strain 5AT).